The chain runs to 589 residues: MTVQTKTKGLAWQEKPLSDNERLKTESNFLRGTILDDLKDPLTGGFKGDNFQLIRFHGMYEQDDRDIRAERAEAKLEPLKFMLLRCRLPGGIIKPSQWIELDKFARENSHYRSIRLTNRQTFQFHGVPKAKLQTMHRLLHKLGLDSIATAADMNRNVLCTSNPIESELHRQAYEYAKKISEHLLPRTRGYLDVWVDGKKVQSSDDFLQEDEPILGKTYLPRKFKTAVVIPPLNDVDCYGNDLDFVAVSDGNGQLAGFNVLAGGGLSMEHGNTKTYPNISLELGFVPPEHALKAAEAVVTTQRDFGNRSDRKNARTRYTIQNMGLDNFRAEVERRMGMPFEPIRPFKFTGRGDRIGWVKGIDGNWHLTLFIESGRLVDEGGKQLLTGVLEIAKIHKGDFRITANQNLIVANVAEADKAKIEELARTYGLIRNDVSKLRENAMSCVSFPTCPLAMAEAERVLPDFIGELDKIMAKHGTSDDYIVTRITGCPNGCGRAMLAEIGLVGKAVGRYNLHIGGDREGVRIPRLYKENITLPEILSELDDLIGKWAAGRDTDEGFGDFAIRTGIVKPVLDAPVDFWDASKAVPIARA.

4 residues coordinate [4Fe-4S] cluster: C443, C449, C488, and C492. C492 serves as a coordination point for siroheme.

The protein belongs to the nitrite and sulfite reductase 4Fe-4S domain family. As to quaternary structure, alpha(8)-beta(8). The alpha component is a flavoprotein, the beta component is a hemoprotein. Requires siroheme as cofactor. The cofactor is [4Fe-4S] cluster.

It catalyses the reaction hydrogen sulfide + 3 NADP(+) + 3 H2O = sulfite + 3 NADPH + 4 H(+). Its pathway is sulfur metabolism; hydrogen sulfide biosynthesis; hydrogen sulfide from sulfite (NADPH route): step 1/1. In terms of biological role, component of the sulfite reductase complex that catalyzes the 6-electron reduction of sulfite to sulfide. This is one of several activities required for the biosynthesis of L-cysteine from sulfate. The sequence is that of Sulfite reductase [NADPH] hemoprotein beta-component from Neisseria meningitidis serogroup C / serotype 2a (strain ATCC 700532 / DSM 15464 / FAM18).